Here is a 601-residue protein sequence, read N- to C-terminus: Rhizobactin siderophore biosynthesis protein RhbF (601 aa).

Belongs to the IucA/IucC family.

The protein operates within siderophore biosynthesis; rhizobactin biosynthesis. This chain is Rhizobactin siderophore biosynthesis protein RhbF (rhbF), found in Rhizobium meliloti (strain 1021) (Ensifer meliloti).